The chain runs to 180 residues: Dynactin subunit 6 (180 aa).

This sequence belongs to the dynactin subunits 5/6 family. Dynactin subunit 6 subfamily. Subunit of dynactin, a multiprotein complex part of a tripartite complex with dynein and a adapter, such as BICDL1, BICD2 or HOOK3. The dynactin complex is built around ACTR1A/ACTB filament and consists of an actin-related filament composed of a shoulder domain, a pointed end and a barbed end.

The protein localises to the cytoplasm. It is found in the cytoskeleton. Part of the dynactin complex that activates the molecular motor dynein for ultra-processive transport along microtubules. The protein is Dynactin subunit 6 (dnc-6) of Caenorhabditis elegans.